The following is a 171-amino-acid chain: UPF0312 protein SAOUHSC_03022 (171 aa).

Belongs to the UPF0312 family.

The chain is UPF0312 protein SAOUHSC_03022 from Staphylococcus aureus (strain NCTC 8325 / PS 47).